The sequence spans 194 residues: Large ribosomal subunit protein eL15 (194 aa).

Positions 165–194 (AGKKGRGLRNKGKGAEKVRPSIRANEGKGK) are disordered. Residues 167-176 (KKGRGLRNKG) show a composition bias toward basic residues. Residues 177 to 194 (KGAEKVRPSIRANEGKGK) show a composition bias toward basic and acidic residues.

Belongs to the eukaryotic ribosomal protein eL15 family. In terms of assembly, part of the 50S ribosomal subunit.

This Pyrococcus furiosus (strain ATCC 43587 / DSM 3638 / JCM 8422 / Vc1) protein is Large ribosomal subunit protein eL15.